Consider the following 213-residue polypeptide: Protein-L-isoaspartate O-methyltransferase (213 aa).

The active site involves serine 58.

This sequence belongs to the methyltransferase superfamily. L-isoaspartyl/D-aspartyl protein methyltransferase family.

The protein resides in the cytoplasm. The catalysed reaction is [protein]-L-isoaspartate + S-adenosyl-L-methionine = [protein]-L-isoaspartate alpha-methyl ester + S-adenosyl-L-homocysteine. Its function is as follows. Catalyzes the methyl esterification of L-isoaspartyl residues in peptides and proteins that result from spontaneous decomposition of normal L-aspartyl and L-asparaginyl residues. It plays a role in the repair and/or degradation of damaged proteins. The sequence is that of Protein-L-isoaspartate O-methyltransferase from Chlorobaculum tepidum (strain ATCC 49652 / DSM 12025 / NBRC 103806 / TLS) (Chlorobium tepidum).